A 365-amino-acid polypeptide reads, in one-letter code: Putative chalcone synthase (365 aa).

The active site involves Cys-144.

It belongs to the thiolase-like superfamily. Chalcone/stilbene synthases family.

The enzyme catalyses (E)-4-coumaroyl-CoA + 3 malonyl-CoA + 3 H(+) = 2',4,4',6'-tetrahydroxychalcone + 3 CO2 + 4 CoA. The chain is Putative chalcone synthase (bcsA) from Bacillus subtilis (strain 168).